A 109-amino-acid polypeptide reads, in one-letter code: Putative gametogenetin-binding protein 1 (109 aa).

The interaction with GGN stretch occupies residues 24-109 (KAFRSTDTVG…KGEMGNWPPE (86 aa)).

As to quaternary structure, interacts with CCDC159. Interacts with GGN.

Its subcellular location is the cytoplasm. It is found in the membrane. The protein resides in the golgi apparatus. May be involved in spermatogenesis. The chain is Putative gametogenetin-binding protein 1 (GGNBP1) from Homo sapiens (Human).